The sequence spans 103 residues: Small ribosomal subunit protein uS10 (103 aa).

The protein belongs to the universal ribosomal protein uS10 family. As to quaternary structure, part of the 30S ribosomal subunit.

Functionally, involved in the binding of tRNA to the ribosomes. This Neorickettsia sennetsu (strain ATCC VR-367 / Miyayama) (Ehrlichia sennetsu) protein is Small ribosomal subunit protein uS10.